The sequence spans 444 residues: MARSRNRFDRTPFQTAITDLSHDGRGVARRDGEGGKVTFISGALPGEVVVAEPTARSRHFDEAKTVEVLQASPQRVAPRCPHFGVCAGCVLQHLEESQQIVAKQRVLMDNLERIGHVTPQTVLPALVGDTWGYRRKGRFSVRRVEKKDKTLVGFRELDPRFVADLSVCYTVIPQIGEKIPQLAALVEGMDGKRDIPQIEFIAGDDAVALTIRHLQPLSARDEQALVEFAQAHDFAIFLQPGGVDSVHPLWPQEVPLSFRLPKWDVELAFRPLDFIQVNASLNQKMIAHALALLDAKPDDRVLDLFCGLGNFTLPLARTVREVVGVEGDAGLVARARENAQRNGLDNAQFYAADLTQDQRQTAWMRQGFDKLLLDPPRSGAIDVLQQLPLKQFKRIVYVSCHPGSLARDAGYLVNEQGFSLLSAGAMDMFPHTAHVESIAVFEKR.

The TRAM domain maps to 5–67 (RNRFDRTPFQ…RHFDEAKTVE (63 aa)). [4Fe-4S] cluster-binding residues include Cys-80, Cys-86, Cys-89, and Cys-168. S-adenosyl-L-methionine contacts are provided by Gln-276, Phe-305, Asn-310, Glu-326, Asp-353, and Asp-374. The Nucleophile role is filled by Cys-400.

This sequence belongs to the class I-like SAM-binding methyltransferase superfamily. RNA M5U methyltransferase family. RlmD subfamily.

The catalysed reaction is uridine(1939) in 23S rRNA + S-adenosyl-L-methionine = 5-methyluridine(1939) in 23S rRNA + S-adenosyl-L-homocysteine + H(+). Functionally, catalyzes the formation of 5-methyl-uridine at position 1939 (m5U1939) in 23S rRNA. This Xanthomonas campestris pv. campestris (strain 8004) protein is 23S rRNA (uracil(1939)-C(5))-methyltransferase RlmD.